The sequence spans 469 residues: Protein C-ets-2 (469 aa).

In terms of domain architecture, PNT spans 85–170; it reads ATFSGFKKEQ…EHLEQMIKEN (86 aa). Phosphoserine is present on residues serine 220 and serine 225. A disordered region spans residues 264–289; it reads NLLTNNSGTPKDHDSPENGADSFESS. Residues serine 295, serine 298, and serine 301 each carry the phosphoserine modification. The segment at residues 363–443 is a DNA-binding region (ETS); the sequence is IQLWQFLLEL…SGKRYVYRFV (81 aa).

This sequence belongs to the ETS family. Post-translationally, phosphorylation by CDK10 at Ser-220 and Ser-225 creates a phosphodegron that targets ETS2 for proteasomal degradation.

The protein resides in the nucleus. In terms of biological role, transcription factor activating transcription. Binds specifically the DNA GGAA/T core motif (Ets-binding site or EBS) in gene promoters and stimulates transcription. The protein is Protein C-ets-2 (ETS2) of Homo sapiens (Human).